A 326-amino-acid chain; its full sequence is Myeloid protein 1 (326 aa).

An N-terminal signal peptide occupies residues 1-18 (MPALSLIALLSLVSTAFA). 2 consecutive repeat copies span residues 28–162 (QQGR…SDPT) and 177–312 (QQDA…SDPT). 3 disulfides stabilise this stretch: Cys37–Cys74, Cys48–Cys53, and Cys113–Cys156. The Zn(2+) site is built by His67, Asp71, and His152. Positions 307-326 (DRSDPTSNLERGKGESEMEV) are disordered.

This sequence belongs to the LECT2/MIM-1 family. Post-translationally, substrate for arginine-specific ADP-ribosyltransferase.

Its subcellular location is the cytoplasmic granule. This is Myeloid protein 1 (MIM1) from Gallus gallus (Chicken).